The primary structure comprises 505 residues: Probable alpha-L-arabinofuranosidase C (505 aa).

N-linked (GlcNAc...) asparagine glycans are attached at residues Asn-152, Asn-181, and Asn-269.

The protein belongs to the glycosyl hydrolase 51 family.

It localises to the secreted. The catalysed reaction is Hydrolysis of terminal non-reducing alpha-L-arabinofuranoside residues in alpha-L-arabinosides.. The protein operates within glycan metabolism; L-arabinan degradation. Its function is as follows. Alpha-L-arabinofuranosidase involved in the degradation of arabinoxylan, a major component of plant hemicellulose. Acts only on small linear 1,5-alpha-linked L-arabinofuranosyl oligosaccharides. The polypeptide is Probable alpha-L-arabinofuranosidase C (abfC) (Aspergillus niger (strain ATCC MYA-4892 / CBS 513.88 / FGSC A1513)).